The primary structure comprises 248 residues: 1-(5-phosphoribosyl)-5-[(5-phosphoribosylamino)methylideneamino] imidazole-4-carboxamide isomerase (248 aa).

Residue D11 is the Proton acceptor of the active site. Residue D132 is the Proton donor of the active site.

Belongs to the HisA/HisF family.

Its subcellular location is the cytoplasm. The enzyme catalyses 1-(5-phospho-beta-D-ribosyl)-5-[(5-phospho-beta-D-ribosylamino)methylideneamino]imidazole-4-carboxamide = 5-[(5-phospho-1-deoxy-D-ribulos-1-ylimino)methylamino]-1-(5-phospho-beta-D-ribosyl)imidazole-4-carboxamide. The protein operates within amino-acid biosynthesis; L-histidine biosynthesis; L-histidine from 5-phospho-alpha-D-ribose 1-diphosphate: step 4/9. The sequence is that of 1-(5-phosphoribosyl)-5-[(5-phosphoribosylamino)methylideneamino] imidazole-4-carboxamide isomerase from Bradyrhizobium diazoefficiens (strain JCM 10833 / BCRC 13528 / IAM 13628 / NBRC 14792 / USDA 110).